The sequence spans 1038 residues: Activated CDC42 kinase 1 (1038 aa).

The tract at residues 1–110 (MQPEEGTGWL…TSPAPGGPAG (110 aa)) is SAM-like domain. The segment at 90-114 (PPHHSQSTFRKTSPAPGGPAGEGPL) is disordered. The Protein kinase domain occupies 126–385 (LRLLEKLGDG…PTFVALRDFL (260 aa)). ATP-binding positions include 132 to 140 (LGDGSFGVV) and lysine 158. Catalysis depends on aspartate 252, which acts as the Proton acceptor. At tyrosine 284 the chain carries Phosphotyrosine; by SRC and autocatalysis. The 61-residue stretch at 388–448 (AQPTDMRALQ…PRNVVTSVAG (61 aa)) folds into the SH3 domain. The CRIB domain maps to 454 to 466 (ISQPLQNSFIHTG). The segment at 497–535 (LSVELSTSRPPQHLGGVKKPTYDPVSEDQDPLSSDFKRL) is disordered. Position 518 is a phosphotyrosine (tyrosine 518). A required for interaction with SRC region spans residues 623-652 (DWDARPLPPPPAYDDVAQDEDDFEICSINS). Positions 632-635 (PPAY) are required for interaction with NEDD4. Disordered stretches follow at residues 659-702 (VPAG…SSAQ) and 718-840 (LQAP…GPRA). Serine 724 carries the post-translational modification Phosphoserine. Positions 733-876 (GDDKPQVPPR…SYLERYQRFL (144 aa)) are EBD domain. 3 stretches are compositionally biased toward pro residues: residues 738–749 (QVPPRVPIPPRP), 772–783 (PASPPRVPPREP), and 794–805 (PLVPPGSSPLPP). Position 827 is a phosphotyrosine (tyrosine 827). Arginine 839 carries the omega-N-methylarginine modification. 2 positions are modified to phosphotyrosine: tyrosine 859 and tyrosine 872. A Phosphoserine modification is found at serine 881. Residues 917–957 (LDPKANFSTNNSNPGARPPPPRATARLPQRGCPGDGPEAGR) are disordered. One can recognise a UBA domain in the interval 958-996 (PADKIQMAMVHGVTTEECQAALQCHGWSVQRAAQYLKVE).

This sequence belongs to the protein kinase superfamily. Tyr protein kinase family. In terms of assembly, interacts with NEDD4 (via WW3 domain). NEDD4L and EGF promote association with NEDD4. Homodimer. Interacts with AR, CDC42, WWASL and WWOX. Interacts with CSPG4 (activated). Interacts with MERTK (activated); stimulates autophosphorylation. May interact (phosphorylated) with HSP90AB1; maintains kinase activity. Interacts with NPHP1. Interacts with SNX9 (via SH3 domain). Interacts with SRC (via SH2 and SH3 domain). Interacts with EGFR, and this interaction is dependent on EGF stimulation and kinase activity of EGFR. Interacts (via kinase domain) with AKT1. Part of a collagen stimulated complex involved in cell migration composed of CDC42, CRK, TNK2 and BCAR1/p130cas. Interacts with BCAR1/p130cas via SH3 domains. Forms complexes with GRB2 and numerous receptor tyrosine kinases (RTK) including LTK, AXL or PDGFRL, in which GRB2 promotes RTK recruitment by TNK2. The cofactor is Mg(2+). Autophosphorylation regulates kinase activity. Phosphorylation on Tyr-518 is required for interaction with SRC and is observed during association with clathrin-coated pits. In terms of processing, polyubiquitinated by NEDD4 and NEDD4L. Degradation can be induced by EGF and is lysosome-dependent. As to expression, the Tyr-284 phosphorylated form shows a significant increase in expression in breast cancers during the progressive stages i.e. normal to hyperplasia (ADH), ductal carcinoma in situ (DCIS), invasive ductal carcinoma (IDC) and lymph node metastatic (LNMM) stages. It also shows a significant increase in expression in prostate cancers during the progressive stages.

It is found in the cell membrane. Its subcellular location is the nucleus. It localises to the endosome. The protein localises to the cell junction. The protein resides in the adherens junction. It is found in the cytoplasmic vesicle membrane. Its subcellular location is the cytoplasmic vesicle. It localises to the clathrin-coated vesicle. The protein localises to the membrane. The protein resides in the clathrin-coated pit. It is found in the cytoplasm. Its subcellular location is the perinuclear region. It localises to the cytosol. The catalysed reaction is L-tyrosyl-[protein] + ATP = O-phospho-L-tyrosyl-[protein] + ADP + H(+). It carries out the reaction L-seryl-[protein] + ATP = O-phospho-L-seryl-[protein] + ADP + H(+). The enzyme catalyses L-threonyl-[protein] + ATP = O-phospho-L-threonyl-[protein] + ADP + H(+). Its activity is regulated as follows. Inhibited by AIM-100 (4-amino-5,6-biaryl-furo[2,3-d]pyrimidine), which suppresses activating phosphorylation at Tyr-284. Repressed by dasatinib. Non-receptor tyrosine-protein and serine/threonine-protein kinase that is implicated in cell spreading and migration, cell survival, cell growth and proliferation. Transduces extracellular signals to cytosolic and nuclear effectors. Phosphorylates AKT1, AR, MCF2, WASL and WWOX. Implicated in trafficking and clathrin-mediated endocytosis through binding to epidermal growth factor receptor (EGFR) and clathrin. Binds to both poly- and mono-ubiquitin and regulates ligand-induced degradation of EGFR, thereby contributing to the accumulation of EGFR at the limiting membrane of early endosomes. Downstream effector of CDC42 which mediates CDC42-dependent cell migration via phosphorylation of BCAR1. May be involved both in adult synaptic function and plasticity and in brain development. Activates AKT1 by phosphorylating it on 'Tyr-176'. Phosphorylates AR on 'Tyr-267' and 'Tyr-363' thereby promoting its recruitment to androgen-responsive enhancers (AREs). Phosphorylates WWOX on 'Tyr-287'. Phosphorylates MCF2, thereby enhancing its activity as a guanine nucleotide exchange factor (GEF) toward Rho family proteins. Contributes to the control of AXL receptor levels. Confers metastatic properties on cancer cells and promotes tumor growth by negatively regulating tumor suppressor such as WWOX and positively regulating pro-survival factors such as AKT1 and AR. Phosphorylates WASP. This Homo sapiens (Human) protein is Activated CDC42 kinase 1 (TNK2).